The primary structure comprises 339 residues: Glycerol-3-phosphate dehydrogenase [NAD(P)+] (339 aa).

4 residues coordinate NADPH: S15, Y16, H36, and K110. Sn-glycerol 3-phosphate-binding residues include K110, G139, and T141. A143 contributes to the NADPH binding site. 5 residues coordinate sn-glycerol 3-phosphate: K195, D248, S258, R259, and N260. Catalysis depends on K195, which acts as the Proton acceptor. Residue R259 participates in NADPH binding. V283 and E285 together coordinate NADPH.

Belongs to the NAD-dependent glycerol-3-phosphate dehydrogenase family.

Its subcellular location is the cytoplasm. The enzyme catalyses sn-glycerol 3-phosphate + NAD(+) = dihydroxyacetone phosphate + NADH + H(+). The catalysed reaction is sn-glycerol 3-phosphate + NADP(+) = dihydroxyacetone phosphate + NADPH + H(+). It participates in membrane lipid metabolism; glycerophospholipid metabolism. Functionally, catalyzes the reduction of the glycolytic intermediate dihydroxyacetone phosphate (DHAP) to sn-glycerol 3-phosphate (G3P), the key precursor for phospholipid synthesis. This Citrobacter koseri (strain ATCC BAA-895 / CDC 4225-83 / SGSC4696) protein is Glycerol-3-phosphate dehydrogenase [NAD(P)+].